The primary structure comprises 1370 residues: DNA-directed RNA polymerase subunit beta (1370 aa).

It belongs to the RNA polymerase beta chain family. The RNAP catalytic core consists of 2 alpha, 1 beta, 1 beta' and 1 omega subunit. When a sigma factor is associated with the core the holoenzyme is formed, which can initiate transcription.

It catalyses the reaction RNA(n) + a ribonucleoside 5'-triphosphate = RNA(n+1) + diphosphate. In terms of biological role, DNA-dependent RNA polymerase catalyzes the transcription of DNA into RNA using the four ribonucleoside triphosphates as substrates. This Delftia acidovorans (strain DSM 14801 / SPH-1) protein is DNA-directed RNA polymerase subunit beta.